Reading from the N-terminus, the 305-residue chain is Acetylglutamate kinase (305 aa).

Substrate is bound by residues 67–68, R89, and N190; that span reads GG.

It belongs to the acetylglutamate kinase family. ArgB subfamily.

The protein resides in the cytoplasm. It catalyses the reaction N-acetyl-L-glutamate + ATP = N-acetyl-L-glutamyl 5-phosphate + ADP. The protein operates within amino-acid biosynthesis; L-arginine biosynthesis; N(2)-acetyl-L-ornithine from L-glutamate: step 2/4. Catalyzes the ATP-dependent phosphorylation of N-acetyl-L-glutamate. The sequence is that of Acetylglutamate kinase from Bifidobacterium animalis subsp. lactis (strain AD011).